The sequence spans 447 residues: Argininosuccinate synthase (447 aa).

ATP contacts are provided by residues 20 to 28 and alanine 46; that span reads AFSGGLDTS. Tyrosine 102 serves as a coordination point for L-citrulline. 2 residues coordinate ATP: glycine 132 and threonine 134. L-aspartate contacts are provided by threonine 134, asparagine 138, and aspartate 139. Asparagine 138 provides a ligand contact to L-citrulline. ATP is bound at residue aspartate 139. Positions 142 and 195 each coordinate L-citrulline. Residue aspartate 197 coordinates ATP. L-citrulline is bound by residues threonine 204, glutamate 206, and glutamate 283.

This sequence belongs to the argininosuccinate synthase family. Type 2 subfamily. Homotetramer.

Its subcellular location is the cytoplasm. The catalysed reaction is L-citrulline + L-aspartate + ATP = 2-(N(omega)-L-arginino)succinate + AMP + diphosphate + H(+). It functions in the pathway amino-acid biosynthesis; L-arginine biosynthesis; L-arginine from L-ornithine and carbamoyl phosphate: step 2/3. This chain is Argininosuccinate synthase (argG), found in Neisseria meningitidis serogroup A / serotype 4A (strain DSM 15465 / Z2491).